Here is a 474-residue protein sequence, read N- to C-terminus: UDP glycosyltransferase 9 (474 aa).

UDP-alpha-D-glucose-binding positions include Ser296, 349-350, 367-375, and 389-392; these read WC, HCGWNSTLE, and WADQ.

Belongs to the UDP-glycosyltransferase family.

This is UDP glycosyltransferase 9 from Catharanthus roseus (Madagascar periwinkle).